Consider the following 348-residue polypeptide: Probable protein phosphatase 2C 35 (348 aa).

Residues 11 to 24 (RYPSSSSDGDSRGP) show a composition bias toward low complexity. Residues 11-40 (RYPSSSSDGDSRGPLEANGVLKGKDQKPLG) form a disordered region. The PPM-type phosphatase domain occupies 52-342 (VYSVLSQRGY…DDITIIIVQI (291 aa)). Positions 93, 94, 289, and 333 each coordinate Mn(2+).

The protein belongs to the PP2C family. It depends on Mg(2+) as a cofactor. Mn(2+) is required as a cofactor.

The catalysed reaction is O-phospho-L-seryl-[protein] + H2O = L-seryl-[protein] + phosphate. It carries out the reaction O-phospho-L-threonyl-[protein] + H2O = L-threonyl-[protein] + phosphate. This Arabidopsis thaliana (Mouse-ear cress) protein is Probable protein phosphatase 2C 35.